The sequence spans 35 residues: MSDIN-like toxin proprotein 1 (35 aa).

Residues M1 to P10 constitute a propeptide that is removed on maturation. Positions I11–P20 form a cross-link, cyclopeptide (Ile-Pro). The propeptide occupies L21–R35.

Belongs to the MSDIN fungal toxin family. Post-translationally, processed by the macrocyclase-peptidase enzyme POPB to yield a toxic cyclic decapeptide. POPB first removes 10 residues from the N-terminus. Conformational trapping of the remaining peptide forces the enzyme to release this intermediate rather than proceed to macrocyclization. The enzyme rebinds the remaining peptide in a different conformation and catalyzes macrocyclization of the N-terminal 10 residues.

Probable toxin that belongs to the MSDIN-like toxin family responsible for a large number of food poisoning cases and deaths. In Amanita rimosa, this protein is MSDIN-like toxin proprotein 1.